Here is a 104-residue protein sequence, read N- to C-terminus: uncharacterized protein (104 aa).

An N-terminal signal peptide occupies residues 1 to 23; that stretch reads MDIHDYVELIALAFWVISVVSVG.

This is an uncharacterized protein from Lactobacillus helveticus (Lactobacillus suntoryeus).